A 341-amino-acid polypeptide reads, in one-letter code: L-threonine 3-dehydrogenase (341 aa).

Cys38 provides a ligand contact to Zn(2+). Residues Thr40 and His43 each act as charge relay system in the active site. Residues His63, Glu64, Cys93, Cys96, Cys99, and Cys107 each coordinate Zn(2+). NAD(+) contacts are provided by residues Ile175, Asp195, Arg200, 262 to 264 (LGI), and 286 to 287 (IY).

Belongs to the zinc-containing alcohol dehydrogenase family. Homotetramer. Zn(2+) serves as cofactor.

The protein localises to the cytoplasm. It carries out the reaction L-threonine + NAD(+) = (2S)-2-amino-3-oxobutanoate + NADH + H(+). Its pathway is amino-acid degradation; L-threonine degradation via oxydo-reductase pathway; glycine from L-threonine: step 1/2. Its function is as follows. Catalyzes the NAD(+)-dependent oxidation of L-threonine to 2-amino-3-ketobutyrate. The protein is L-threonine 3-dehydrogenase of Idiomarina loihiensis (strain ATCC BAA-735 / DSM 15497 / L2-TR).